Reading from the N-terminus, the 310-residue chain is Nitric oxide synthase-interacting protein homolog (310 aa).

Polar residues predominate over residues 115–124; sequence FSAIESTPSR. Residues 115 to 141 are disordered; the sequence is FSAIESTPSRTGAVATPRPEVGSLKRQ.

It belongs to the NOSIP family.

It localises to the cytoplasm. The protein resides in the nucleus. Negatively regulates nitric oxide production by inducing nitric oxide synthase translocation to actin cytoskeleton and inhibiting its enzymatic activity. The chain is Nitric oxide synthase-interacting protein homolog from Caenorhabditis elegans.